The following is a 288-amino-acid chain: Bifunctional protein FolD (288 aa).

NADP(+) is bound by residues 166-168 (GRS), serine 191, and isoleucine 232.

This sequence belongs to the tetrahydrofolate dehydrogenase/cyclohydrolase family. Homodimer.

The enzyme catalyses (6R)-5,10-methylene-5,6,7,8-tetrahydrofolate + NADP(+) = (6R)-5,10-methenyltetrahydrofolate + NADPH. It carries out the reaction (6R)-5,10-methenyltetrahydrofolate + H2O = (6R)-10-formyltetrahydrofolate + H(+). It functions in the pathway one-carbon metabolism; tetrahydrofolate interconversion. Catalyzes the oxidation of 5,10-methylenetetrahydrofolate to 5,10-methenyltetrahydrofolate and then the hydrolysis of 5,10-methenyltetrahydrofolate to 10-formyltetrahydrofolate. The sequence is that of Bifunctional protein FolD from Rickettsia rickettsii (strain Iowa).